Consider the following 373-residue polypeptide: Phospho-N-acetylmuramoyl-pentapeptide-transferase (373 aa).

The next 11 membrane-spanning stretches (helical) occupy residues 16-36 (WWTK…AASF), 46-66 (LLSL…SWGI), 93-113 (PTMG…FVSV), 120-140 (QLLA…FDDW), 157-177 (LLLQ…QHWI), 185-205 (LGIS…VFLA), 216-236 (LDGL…VQLM), 242-262 (GNPV…GFLM), 270-290 (VFMG…VAIL), 298-318 (LVMG…VWVF), and 350-369 (MVVR…GLLL).

The protein belongs to the glycosyltransferase 4 family. MraY subfamily. The cofactor is Mg(2+).

The protein resides in the cell inner membrane. The catalysed reaction is UDP-N-acetyl-alpha-D-muramoyl-L-alanyl-gamma-D-glutamyl-meso-2,6-diaminopimeloyl-D-alanyl-D-alanine + di-trans,octa-cis-undecaprenyl phosphate = di-trans,octa-cis-undecaprenyl diphospho-N-acetyl-alpha-D-muramoyl-L-alanyl-D-glutamyl-meso-2,6-diaminopimeloyl-D-alanyl-D-alanine + UMP. Its pathway is cell wall biogenesis; peptidoglycan biosynthesis. In terms of biological role, catalyzes the initial step of the lipid cycle reactions in the biosynthesis of the cell wall peptidoglycan: transfers peptidoglycan precursor phospho-MurNAc-pentapeptide from UDP-MurNAc-pentapeptide onto the lipid carrier undecaprenyl phosphate, yielding undecaprenyl-pyrophosphoryl-MurNAc-pentapeptide, known as lipid I. This Prochlorococcus marinus (strain MIT 9313) protein is Phospho-N-acetylmuramoyl-pentapeptide-transferase.